Here is a 379-residue protein sequence, read N- to C-terminus: Chaperone protein DnaJ (379 aa).

The J domain occupies 5-70; it reads DYYEVLGVSR…QKRAAYDQYG (66 aa). The segment at 134–212 adopts a CR-type zinc-finger fold; sequence GVTKEIRIPT…CHGHGRVEKS (79 aa). Zn(2+) contacts are provided by Cys-147, Cys-150, Cys-164, Cys-167, Cys-186, Cys-189, Cys-200, and Cys-203. CXXCXGXG motif repeat units follow at residues 147–154, 164–171, 186–193, and 200–207; these read CDVCHGSG, CPTCHGAG, CPHCHGRG, and CNKCHGHG.

It belongs to the DnaJ family. As to quaternary structure, homodimer. Zn(2+) serves as cofactor.

It localises to the cytoplasm. In terms of biological role, participates actively in the response to hyperosmotic and heat shock by preventing the aggregation of stress-denatured proteins and by disaggregating proteins, also in an autonomous, DnaK-independent fashion. Unfolded proteins bind initially to DnaJ; upon interaction with the DnaJ-bound protein, DnaK hydrolyzes its bound ATP, resulting in the formation of a stable complex. GrpE releases ADP from DnaK; ATP binding to DnaK triggers the release of the substrate protein, thus completing the reaction cycle. Several rounds of ATP-dependent interactions between DnaJ, DnaK and GrpE are required for fully efficient folding. Also involved, together with DnaK and GrpE, in the DNA replication of plasmids through activation of initiation proteins. This Yersinia pestis bv. Antiqua (strain Antiqua) protein is Chaperone protein DnaJ.